The chain runs to 467 residues: 2-succinylbenzoate--CoA ligase (467 aa).

The protein belongs to the ATP-dependent AMP-binding enzyme family. MenE subfamily.

It catalyses the reaction 2-succinylbenzoate + ATP + CoA = 2-succinylbenzoyl-CoA + AMP + diphosphate. Its pathway is quinol/quinone metabolism; 1,4-dihydroxy-2-naphthoate biosynthesis; 1,4-dihydroxy-2-naphthoate from chorismate: step 5/7. It participates in quinol/quinone metabolism; menaquinone biosynthesis. Functionally, converts 2-succinylbenzoate (OSB) to 2-succinylbenzoyl-CoA (OSB-CoA). The sequence is that of 2-succinylbenzoate--CoA ligase from Listeria monocytogenes serovar 1/2a (strain ATCC BAA-679 / EGD-e).